Consider the following 299-residue polypeptide: uncharacterized protein (299 aa).

It belongs to the glycosyltransferase 2 family.

This is an uncharacterized protein from Mycoplasma pneumoniae (strain ATCC 29342 / M129 / Subtype 1) (Mycoplasmoides pneumoniae).